The following is a 923-amino-acid chain: Smoothelin (923 aa).

Ala2 carries the post-translational modification N-acetylalanine. Residues 24-89 (LAERRRIRSA…ARLAGRLESM (66 aa)) adopt a coiled-coil conformation. A disordered region spans residues 134-456 (SRLPSSGPRE…GTGEPGGSMK (323 aa)). 2 stretches are compositionally biased toward low complexity: residues 164–179 (QEQQ…TPED) and 192–205 (RAPP…PASP). Residues 237–252 (LPHPSEAPSPEPPMSP) are compositionally biased toward pro residues. Composition is skewed to polar residues over residues 272 to 285 (PSDT…FSNT) and 293 to 314 (TKSC…NREP). Phosphoserine is present on residues Ser299, Ser301, Ser304, and Ser340. Phosphothreonine is present on residues Thr359 and Thr372. The segment covering 366–389 (PSLISTTPASSSSSNSSSPSPSDT) has biased composition (low complexity). A phosphoserine mark is found at Ser501, Ser521, and Ser574. 2 disordered regions span residues 542–578 (KMEP…PLSA) and 615–772 (QRKR…ARKA). The stretch at 601–628 (EERKLIRAALRELRQRKRDQRDKERERR) forms a coiled coil. The segment covering 615-638 (QRKRDQRDKERERRLREARARPGE) has biased composition (basic and acidic residues). Position 641 is a phosphoserine (Ser641). The segment covering 674 to 687 (NDGTQTARTTTVES) has biased composition (polar residues). Low complexity predominate over residues 697–721 (SSSSSTTTTTVQTKSFSSSSSSSSS). Phosphoserine is present on Ser735. The span at 744-756 (LERRQAEKKKELM) shows a compositional bias: basic and acidic residues. Ser798 is subject to Phosphoserine. A Calponin-homology (CH) domain is found at 805-912 (NSIKQMLLDW…YVQSLYNHLR (108 aa)).

Belongs to the smoothelin family.

The protein resides in the cytoplasm. Its subcellular location is the cytoskeleton. Structural protein of the cytoskeleton. The chain is Smoothelin (Smtn) from Mus musculus (Mouse).